Here is an 852-residue protein sequence, read N- to C-terminus: Lon protease homolog 2, peroxisomal (852 aa).

Residue S2 is modified to N-acetylserine. Positions 13-222 (LPLLLTHEGV…MTIPLLVRQI (210 aa)) constitute a Lon N-terminal domain. 375–382 (GPPGVGKT) lines the ATP pocket. The 187-residue stretch at 651-837 (LSQPGVAIGL…DEVLNAAFDG (187 aa)) folds into the Lon proteolytic domain. Active-site residues include S743 and K786. Positions 850 to 852 (SKL) match the Microbody targeting signal motif.

The protein belongs to the peptidase S16 family. In terms of assembly, interacts with PEX5. Interacts with TYSND1. May interact with enzymes involved in beta-oxidation of fatty acids, including ACOX1/AOX.

Its subcellular location is the peroxisome matrix. It carries out the reaction Hydrolysis of proteins in presence of ATP.. Functionally, ATP-dependent serine protease that mediates the selective degradation of misfolded and unassembled polypeptides in the peroxisomal matrix. Necessary for type 2 peroxisome targeting signal (PTS2)-containing protein processing and facilitates peroxisome matrix protein import. May indirectly regulate peroxisomal fatty acid beta-oxidation through degradation of the self-processed forms of TYSND1. This is Lon protease homolog 2, peroxisomal from Pongo abelii (Sumatran orangutan).